The following is a 166-amino-acid chain: Lipoprotein signal peptidase (166 aa).

4 helical membrane-spanning segments follow: residues 9–29 (ASGA…FDQL), 45–65 (ALTS…FGFL), 71–91 (WQRW…CYLL), and 99–119 (LFSL…IDRL). Residues Asp126 and Asp144 contribute to the active site. Residues 135-155 (WHFPAFNLADSAITVGAVLLI) form a helical membrane-spanning segment.

This sequence belongs to the peptidase A8 family.

It is found in the cell inner membrane. The enzyme catalyses Release of signal peptides from bacterial membrane prolipoproteins. Hydrolyzes -Xaa-Yaa-Zaa-|-(S,diacylglyceryl)Cys-, in which Xaa is hydrophobic (preferably Leu), and Yaa (Ala or Ser) and Zaa (Gly or Ala) have small, neutral side chains.. It functions in the pathway protein modification; lipoprotein biosynthesis (signal peptide cleavage). Its function is as follows. This protein specifically catalyzes the removal of signal peptides from prolipoproteins. This chain is Lipoprotein signal peptidase, found in Burkholderia vietnamiensis (strain G4 / LMG 22486) (Burkholderia cepacia (strain R1808)).